Consider the following 79-residue polypeptide: RNA-binding protein Hfq (79 aa).

The region spanning aspartate 10–valine 70 is the Sm domain.

It belongs to the Hfq family. Homohexamer.

Its function is as follows. RNA chaperone that binds small regulatory RNA (sRNAs) and mRNAs to facilitate mRNA translational regulation in response to envelope stress, environmental stress and changes in metabolite concentrations. Also binds with high specificity to tRNAs. The sequence is that of RNA-binding protein Hfq from Bartonella henselae (strain ATCC 49882 / DSM 28221 / CCUG 30454 / Houston 1) (Rochalimaea henselae).